Here is a 505-residue protein sequence, read N- to C-terminus: Salutaridine synthase (505 aa).

A helical transmembrane segment spans residues 10-30 (DFWMIACTVIIVFALVKFMFS). C444 contributes to the heme binding site.

Belongs to the cytochrome P450 family. Heme is required as a cofactor.

It localises to the endoplasmic reticulum membrane. The enzyme catalyses (R)-reticuline + reduced [NADPH--hemoprotein reductase] + O2 = salutaridine + oxidized [NADPH--hemoprotein reductase] + 2 H2O + H(+). Functionally, cytochrome P450 monooxygenase involved in biosynthesis of morphinan-type benzylisoquinoline and opiate alkaloids natural products. Catalyzes the formation of the morphinan alkaloid salutaridine by intramolecular phenol oxidation of (R)-reticuline without the incorporation of oxygen into the product. Can also use (R)-norreticuline as substrate. The sequence is that of Salutaridine synthase from Papaver somniferum (Opium poppy).